The primary structure comprises 944 residues: Protein translocase subunit SecA (944 aa).

Residues Gln90, Gly108–Thr112, and Asp509 contribute to the ATP site. Residues Val533–Ser565 form a disordered region.

It belongs to the SecA family. In terms of assembly, monomer and homodimer. Part of the essential Sec protein translocation apparatus which comprises SecA, SecYEG and auxiliary proteins SecDF. Other proteins may also be involved.

It localises to the cell inner membrane. The protein localises to the cellular thylakoid membrane. Its subcellular location is the cytoplasm. It carries out the reaction ATP + H2O + cellular proteinSide 1 = ADP + phosphate + cellular proteinSide 2.. In terms of biological role, part of the Sec protein translocase complex. Interacts with the SecYEG preprotein conducting channel. Has a central role in coupling the hydrolysis of ATP to the transfer of proteins into and across the cell membrane, serving as an ATP-driven molecular motor driving the stepwise translocation of polypeptide chains across the membrane. Functionally, probably participates in protein translocation into and across both the cytoplasmic and thylakoid membranes in cyanobacterial cells. The sequence is that of Protein translocase subunit SecA from Prochlorococcus marinus (strain NATL1A).